Consider the following 388-residue polypeptide: Staphopain A (388 aa).

The signal sequence occupies residues 1-25 (MKRNFPKLIALSLIFSLSVTPIANA). The propeptide occupies 26–214 (ESNSNIKAKD…TSQFKSNNYT (189 aa)). Catalysis depends on residues Cys-238, His-334, and Asn-355.

The protein belongs to the peptidase C47 family. In terms of assembly, in the cytoplasm, prematurely activated/folded ScpA forms a stable non-covalent complex with ScpB. Cleavage leads to the activation of ScpA probably by an auto-catalytic manner.

The protein resides in the secreted. It carries out the reaction Broad endopeptidase action on proteins including elastin, but rather limited hydrolysis of small-molecule substrates. Assays are conveniently made with hemoglobin, casein or Z-Phe-Arg-NHMec as substrate.. Its activity is regulated as follows. Prematurely activated/folded staphopain A is inhibited by staphostatin A (ScpB), which is probably required to protect staphylococcal cytoplasmic proteins from degradation by ScpA. Its function is as follows. Cysteine protease that plays an important role in the inhibition of host innate immune response. Cleaves host elastins found in connective tissues, pulmonary surfactant protein A in the lungs, and the chemokine receptor CXCR2 on leukocytes. Proteolytic cleavage of surfactant protein A impairs bacterial phagocytosis by neutrophils while CXCR2 degradation blocks neutrophil activation and chemotaxis. Additionally, promotes vascular leakage by activating the plasma kallikerin/kinin system, resulting in hypotension. The sequence is that of Staphopain A (sspP) from Staphylococcus aureus (strain Mu50 / ATCC 700699).